The sequence spans 242 residues: tRNA (guanine-N(1)-)-methyltransferase (242 aa).

S-adenosyl-L-methionine-binding positions include G114 and 134–139 (IGDFVL). The segment covering 223-233 (RRDLLPEHSKN) has biased composition (basic and acidic residues). Residues 223-242 (RRDLLPEHSKNNPEQTNKLS) are disordered.

Belongs to the RNA methyltransferase TrmD family. Homodimer.

It localises to the cytoplasm. The catalysed reaction is guanosine(37) in tRNA + S-adenosyl-L-methionine = N(1)-methylguanosine(37) in tRNA + S-adenosyl-L-homocysteine + H(+). Specifically methylates guanosine-37 in various tRNAs. This Rhodopirellula baltica (strain DSM 10527 / NCIMB 13988 / SH1) protein is tRNA (guanine-N(1)-)-methyltransferase.